The following is a 197-amino-acid chain: Probable GTP-binding protein EngB (197 aa).

Residues 22–195 (QLPELALAGR…WRTILNHLKV (174 aa)) form the EngB-type G domain. Residues 30–37 (GRSNVGKS), 57–61 (GKTQT), 75–78 (DVPG), 142–145 (TKAD), and 174–176 (FSS) each bind GTP. Mg(2+) is bound by residues Ser37 and Thr59.

Belongs to the TRAFAC class TrmE-Era-EngA-EngB-Septin-like GTPase superfamily. EngB GTPase family. The cofactor is Mg(2+).

Its function is as follows. Necessary for normal cell division and for the maintenance of normal septation. The sequence is that of Probable GTP-binding protein EngB from Shouchella clausii (strain KSM-K16) (Alkalihalobacillus clausii).